The following is a 197-amino-acid chain: RILP-like protein 2 (197 aa).

Positions 14–96 constitute an RH1 domain; that stretch reads EDEGALAKSP…KQEVEGLRRA (83 aa). Positions 65 to 153 form a coiled coil; that stretch reads LEALVNEGSL…VQEELQCYRS (89 aa). Residues 119 to 184 enclose the RH2 domain; the sequence is RPRFTLQELR…GNGEKEERTI (66 aa).

In terms of assembly, homodimer. Interacts (via N-terminus) with MYO5A, the interaction is required for its role in dendrite formation. Interacts with RAC1. Interacts with RAB8A; interaction is dependent on the phosphorylation of RAB8A on 'Thr-72'. Interacts with RAB10 and RAB12; interaction is dependent on the phosphorylation of 'Thr-73' on RAB10 and 'Ser-105' on RAB12.

It localises to the cytoplasm. The protein localises to the cytosol. Its subcellular location is the cytoskeleton. The protein resides in the microtubule organizing center. It is found in the centrosome. It localises to the cell projection. The protein localises to the cilium. Functionally, involved in cell shape and neuronal morphogenesis, positively regulating the establishment and maintenance of dendritic spines. Plays a role in cellular protein transport, including protein transport away from primary cilia. May function via activation of RAC1 and PAK1. This chain is RILP-like protein 2 (Rilpl2), found in Rattus norvegicus (Rat).